A 397-amino-acid polypeptide reads, in one-letter code: Acetate kinase (397 aa).

Asn7 is a binding site for Mg(2+). Lys14 contacts ATP. Arg90 lines the substrate pocket. The active-site Proton donor/acceptor is Asp147. Residues 207–211 (HLGNG), 282–284 (DFR), and 330–334 (GLGEN) each bind ATP. Glu383 is a binding site for Mg(2+).

This sequence belongs to the acetokinase family. Homodimer. Mg(2+) is required as a cofactor. Mn(2+) serves as cofactor.

The protein localises to the cytoplasm. The catalysed reaction is acetate + ATP = acetyl phosphate + ADP. It participates in metabolic intermediate biosynthesis; acetyl-CoA biosynthesis; acetyl-CoA from acetate: step 1/2. Catalyzes the formation of acetyl phosphate from acetate and ATP. Can also catalyze the reverse reaction. This Clostridium botulinum (strain ATCC 19397 / Type A) protein is Acetate kinase.